Here is a 319-residue protein sequence, read N- to C-terminus: tRNA uridine(34) hydroxylase (319 aa).

One can recognise a Rhodanese domain in the interval 124 to 218; it reads LDEDTVILDA…YGKNEETKGE (95 aa). The Cysteine persulfide intermediate role is filled by Cys-178.

This sequence belongs to the TrhO family.

It carries out the reaction uridine(34) in tRNA + AH2 + O2 = 5-hydroxyuridine(34) in tRNA + A + H2O. Its function is as follows. Catalyzes oxygen-dependent 5-hydroxyuridine (ho5U) modification at position 34 in tRNAs. The chain is tRNA uridine(34) hydroxylase from Listeria monocytogenes serotype 4b (strain CLIP80459).